The chain runs to 630 residues: Probable potassium transport system protein Kup (630 aa).

12 helical membrane-spanning segments follow: residues G19–V39, L59–I79, W108–T128, P145–V165, V173–L193, L220–Y240, W255–I275, P284–A304, I345–F365, A374–Y394, T405–L425, and V427–T447.

It belongs to the HAK/KUP transporter (TC 2.A.72) family.

The protein localises to the cell inner membrane. The catalysed reaction is K(+)(in) + H(+)(in) = K(+)(out) + H(+)(out). Its function is as follows. Transport of potassium into the cell. Likely operates as a K(+):H(+) symporter. The chain is Probable potassium transport system protein Kup from Acidiphilium cryptum (strain JF-5).